The sequence spans 226 residues: UPF0758 protein M6_Spy0838 (226 aa).

In terms of domain architecture, MPN spans 103 to 225 (SVLTSVQVAE…YYSFREKSTL (123 aa)). His174, His176, and Asp187 together coordinate Zn(2+). Positions 174-187 (HNHPSGNIEPSSND) match the JAMM motif motif.

It belongs to the UPF0758 family.

The chain is UPF0758 protein M6_Spy0838 from Streptococcus pyogenes serotype M6 (strain ATCC BAA-946 / MGAS10394).